A 322-amino-acid polypeptide reads, in one-letter code: MRSVVTGVGAYLPSKVVTNDDLAKFVDTSDEWIVERTGIRQRHQAADDQPVSDLAFEAAKEALAAAGKTAADVDLIIVATTTGDLTFPATATIVQRKLGAPVGVAFDVQAVCSGFVYAMSVADGFVARGHSKCALVIGAEAMTRLMDWSDRGTCVLFGDGAGAIVLEPGEGEGTTDDRGMLGFALRADGTKQDLLYVDGGPSTTGTVGKLRMLGNQVFKHAVVNISEAIHAAAGKAGVAVADVDWFIPHQANQRILQGVAHRCGIDEEKVISTVAIHANTSAASIPLAFAHGIKDGRIKKGDLLLLEAMGGGLTWGACVVRL.

Catalysis depends on residues Cys-112 and His-249. The segment at 250–254 (QANQR) is ACP-binding. The active site involves Asn-279.

It belongs to the thiolase-like superfamily. FabH family. As to quaternary structure, homodimer.

It localises to the cytoplasm. The enzyme catalyses malonyl-[ACP] + acetyl-CoA + H(+) = 3-oxobutanoyl-[ACP] + CO2 + CoA. It participates in lipid metabolism; fatty acid biosynthesis. Catalyzes the condensation reaction of fatty acid synthesis by the addition to an acyl acceptor of two carbons from malonyl-ACP. Catalyzes the first condensation reaction which initiates fatty acid synthesis and may therefore play a role in governing the total rate of fatty acid production. Possesses both acetoacetyl-ACP synthase and acetyl transacylase activities. Its substrate specificity determines the biosynthesis of branched-chain and/or straight-chain of fatty acids. The sequence is that of Beta-ketoacyl-[acyl-carrier-protein] synthase III from Caulobacter vibrioides (strain ATCC 19089 / CIP 103742 / CB 15) (Caulobacter crescentus).